Reading from the N-terminus, the 113-residue chain is uncharacterized protein (113 aa).

A compositionally biased stretch (basic and acidic residues) spans methionine 1–glutamate 19. The disordered stretch occupies residues methionine 1 to serine 94. Residues glycine 20 to serine 41 show a composition bias toward basic residues. The span at phenylalanine 52–serine 66 shows a compositional bias: low complexity. Basic residues predominate over residues lysine 75–lysine 92.

This is an uncharacterized protein from Macaca fascicularis (Crab-eating macaque).